The primary structure comprises 389 residues: uncharacterized protein (389 aa).

4 consecutive transmembrane segments (helical) span residues 31–51, 96–116, 123–143, and 152–172; these read LFIV…VEVI, IMQI…ALLV, APLV…MFPP, and MIDA…LPSS.

To M.tuberculosis Rv2571c.

The protein resides in the cell membrane. This is an uncharacterized protein from Corynebacterium glutamicum (strain ATCC 13032 / DSM 20300 / JCM 1318 / BCRC 11384 / CCUG 27702 / LMG 3730 / NBRC 12168 / NCIMB 10025 / NRRL B-2784 / 534).